We begin with the raw amino-acid sequence, 580 residues long: Threonine--tRNA ligase (580 aa).

The segment at 179–476 (DHRKIGKDLN…LLEQTKGILP (298 aa)) is catalytic. Zn(2+) is bound by residues C272, H323, and H453.

This sequence belongs to the class-II aminoacyl-tRNA synthetase family. As to quaternary structure, homodimer. Zn(2+) is required as a cofactor.

It is found in the cytoplasm. It catalyses the reaction tRNA(Thr) + L-threonine + ATP = L-threonyl-tRNA(Thr) + AMP + diphosphate + H(+). Catalyzes the attachment of threonine to tRNA(Thr) in a two-step reaction: L-threonine is first activated by ATP to form Thr-AMP and then transferred to the acceptor end of tRNA(Thr). Also edits incorrectly charged L-seryl-tRNA(Thr). This chain is Threonine--tRNA ligase, found in Ureaplasma parvum serovar 3 (strain ATCC 27815 / 27 / NCTC 11736).